Here is a 515-residue protein sequence, read N- to C-terminus: ATP synthase subunit alpha (515 aa).

171–178 lines the ATP pocket; sequence GDRQTGKT.

The protein belongs to the ATPase alpha/beta chains family. As to quaternary structure, F-type ATPases have 2 components, CF(1) - the catalytic core - and CF(0) - the membrane proton channel. CF(1) has five subunits: alpha(3), beta(3), gamma(1), delta(1), epsilon(1). CF(0) has three main subunits: a(1), b(2) and c(9-12). The alpha and beta chains form an alternating ring which encloses part of the gamma chain. CF(1) is attached to CF(0) by a central stalk formed by the gamma and epsilon chains, while a peripheral stalk is formed by the delta and b chains.

The protein resides in the cell inner membrane. The enzyme catalyses ATP + H2O + 4 H(+)(in) = ADP + phosphate + 5 H(+)(out). In terms of biological role, produces ATP from ADP in the presence of a proton gradient across the membrane. The alpha chain is a regulatory subunit. This chain is ATP synthase subunit alpha, found in Xanthomonas oryzae pv. oryzae (strain MAFF 311018).